Consider the following 539-residue polypeptide: Protein TIC 55, chloroplastic (539 aa).

The transit peptide at 1–50 directs the protein to the chloroplast; the sequence is MAVPFLSSSLQLTPTSPILFTKVTPTPIIHNHRSTCTIPTKPRLRLLRRS. Ala51 carries the N-acetylalanine modification. Residues 51-482 are Stromal-facing; that stretch reads AVAGTAVSDQ…VIKSFELWKN (432 aa). The 106-residue stretch at 88–193 folds into the Rieske domain; sequence WYPLYLTKNV…VKDSQGVVWV (106 aa). The [2Fe-2S] cluster site is built by Cys129, His131, Cys148, and His151. Fe cation-binding residues include His242 and His247. A Redox-active motif motif is present at residues 467-470; sequence CRSC. Residues 483–500 form a helical membrane-spanning segment; that stretch reads ILSATAVALTALAILVVS. Topologically, residues 501-504 are chloroplast intermembrane; sequence RQWK. The helical transmembrane segment at 505–527 threads the bilayer; sequence AVLLGSAALCSAAAYTCLRAINL. The Stromal portion of the chain corresponds to 528-539; it reads NTNNFIRTHRRL.

Part of the Tic complex. Interacts with TIC62 and TIC110. [2Fe-2S] cluster serves as cofactor. In terms of tissue distribution, highly expressed in green tissues and very low levels in non-photosynthetic tissues such as roots and etiolated seedlings.

The protein resides in the plastid. It localises to the chloroplast inner membrane. Functionally, involved in protein precursor import into chloroplasts. Part of the redox regulon consisting of TIC32, TIC 55 and TIC62. This chain is Protein TIC 55, chloroplastic (TIC55), found in Arabidopsis thaliana (Mouse-ear cress).